Here is a 299-residue protein sequence, read N- to C-terminus: Oxaloacetate decarboxylase (299 aa).

Serine 57 contributes to the substrate binding site. Aspartate 95 is a binding site for Mg(2+). Positions 167 and 243 each coordinate substrate.

Belongs to the isocitrate lyase/PEP mutase superfamily. Oxaloacetate decarboxylase family. As to quaternary structure, homotetramer; dimer of dimers. Mg(2+) is required as a cofactor.

The catalysed reaction is oxaloacetate + H(+) = pyruvate + CO2. Its function is as follows. Catalyzes the decarboxylation of oxaloacetate into pyruvate. Seems to play a role in maintaining cellular concentrations of bicarbonate and pyruvate. This Paraburkholderia xenovorans (strain LB400) protein is Oxaloacetate decarboxylase.